We begin with the raw amino-acid sequence, 286 residues long: L-cysteine S-thiosulfotransferase subunit SoxA (286 aa).

Positions 1 to 28 (MKKTIQRGLFTGALVLLTAMTSKPAHAA) are cleaved as a signal peptide. A disulfide bridge links Cys-106 with Cys-137. The Cytochrome c domain maps to 180–286 (DAYMKGKEMF…LKFNGPASRK (107 aa)). Cys-200 and His-204 together coordinate heme. Arg-243 serves as a coordination point for substrate. Cys-247 is a binding site for heme. Residue Cys-247 is the Cysteine persulfide intermediate of the active site.

This sequence belongs to the SoxA family. As to quaternary structure, heterodimer of SoxA and SoxX. The SoxAX complex interacts with CT1020, SoxAX-binding protein SaxB (SoxK); this interaction stimulates catalytic activity of the complex. Heme is required as a cofactor. In terms of processing, cysteine persulfide at Cys-247.

It localises to the periplasm. It carries out the reaction L-cysteinyl-[SoxY protein] + thiosulfate + 2 Fe(III)-[cytochrome c] = S-sulfosulfanyl-L-cysteinyl-[SoxY protein] + 2 Fe(II)-[cytochrome c] + 2 H(+). It catalyses the reaction S-sulfanyl-L-cysteinyl-[SoxY protein] + thiosulfate + 2 Fe(III)-[cytochrome c] = S-(2-sulfodisulfanyl)-L-cysteinyl-[SoxY protein] + 2 Fe(II)-[cytochrome c] + 2 H(+). In terms of biological role, C-type monoheme cytochrome, which is part of the SoxAX cytochrome complex involved in sulfur oxidation. The SoxAX complex catalyzes the formation of a heterodisulfide bond between the conserved cysteine residue on a sulfur carrier SoxYZ complex subunit SoxY and thiosulfate or other inorganic sulfur substrates. This leads to the liberation of two electrons, which may be transferred from the SoxAX complex to another cytochrome c and which then may be used for reductive CO(2) fixation. This Chlorobaculum thiosulfatiphilum (Chlorobium limicola f.sp. thiosulfatophilum) protein is L-cysteine S-thiosulfotransferase subunit SoxA.